Consider the following 186-residue polypeptide: MNTIRNSICLTIITMVLCGFLFPLAITLIGQIFFYQQANGSLITYDNRIVGSKLIGQHWTETRYFHGRPSAVDYNMNPEKLYKNGVSSGGSNESNGNTELIARMKHHVKFGNSNVTIDAATSSGSGLDPHITVENALKQAPRIADARHVSTSRVADLIQHRKQRGVLTNDYVNVLELNIALDKMKD.

A helical membrane pass occupies residues 10–30 (LTIITMVLCGFLFPLAITLIG).

The protein belongs to the KdpC family. In terms of assembly, the system is composed of three essential subunits: KdpA, KdpB and KdpC.

It is found in the cell membrane. Part of the high-affinity ATP-driven potassium transport (or Kdp) system, which catalyzes the hydrolysis of ATP coupled with the electrogenic transport of potassium into the cytoplasm. This subunit acts as a catalytic chaperone that increases the ATP-binding affinity of the ATP-hydrolyzing subunit KdpB by the formation of a transient KdpB/KdpC/ATP ternary complex. This chain is Potassium-transporting ATPase KdpC subunit 1, found in Staphylococcus aureus (strain Mu50 / ATCC 700699).